The primary structure comprises 462 residues: NAD-capped RNA hydrolase NUDT12 (462 aa).

ANK repeat units follow at residues 11-40 (EIVT…SLLN), 45-74 (NGWT…DRSI), and 78-98 (SRQT…ANLL). At Lys-185 the chain carries N6-succinyllysine. Residues Cys-284 and Cys-287 each coordinate Zn(2+). Lys-292 carries the N6-succinyllysine modification. Positions 302 and 307 each coordinate Zn(2+). Substrate-binding positions include Tyr-318, 354–356 (AGF), Glu-370, Glu-374, and Glu-415. A Nudix hydrolase domain is found at 319–453 (PRVDPVVIMQ…SRAIAHQLIK (135 aa)). 4 residues coordinate Mg(2+): Ala-354, Glu-370, Glu-374, and Glu-415. A Nudix box motif is present at residues 355–376 (GFIEPGETIEDAVRREVEEESG). A Microbody targeting signal motif is present at residues 460–462 (PNL).

This sequence belongs to the Nudix hydrolase family. NudC subfamily. Homodimer. Homodimerization is essential for its catalytic activity and protein stability. Interacts (via ANK repeats) with BLMH. Mg(2+) serves as cofactor. Zn(2+) is required as a cofactor.

The protein resides in the cytoplasm. It is found in the peroxisome. It localises to the cytoplasmic granule. It catalyses the reaction a 5'-end NAD(+)-phospho-ribonucleoside in mRNA + H2O = a 5'-end phospho-adenosine-phospho-ribonucleoside in mRNA + beta-nicotinamide D-ribonucleotide + 2 H(+). The enzyme catalyses NAD(+) + H2O = beta-nicotinamide D-ribonucleotide + AMP + 2 H(+). It carries out the reaction NADH + H2O = reduced beta-nicotinamide D-ribonucleotide + AMP + 2 H(+). The catalysed reaction is NADPH + H2O = reduced beta-nicotinamide D-ribonucleotide + adenosine 2',5'-bisphosphate + 2 H(+). In terms of biological role, mRNA decapping enzyme that specifically removes the nicotinamide adenine dinucleotide (NAD) cap from a subset of mRNAs by hydrolyzing the diphosphate linkage to produce nicotinamide mononucleotide (NMN) and 5' monophosphate mRNA. The NAD-cap is present at the 5'-end of some RNAs; in contrast to the canonical N7 methylguanosine (m7G) cap, the NAD cap promotes mRNA decay. Preferentially acts on NAD-capped transcripts in response to nutrient stress. Also acts on free nicotinamide adenine dinucleotide molecules: hydrolyzes NAD(H) into NMN(H) and AMP, and NADPH into NMNH and 2',5'-ADP. May act to regulate the concentration of peroxisomal nicotinamide nucleotide cofactors required for oxidative metabolism in this organelle. Regulates the levels of circadian clock components PER1, PER2, PER3 and CRY2 in the liver. In Pongo abelii (Sumatran orangutan), this protein is NAD-capped RNA hydrolase NUDT12.